The primary structure comprises 736 residues: Subtilisin-like protease SBT4.6 (736 aa).

A signal peptide spans 1 to 24; it reads MATAVSYCLLSCIFALLVVSFASA. Positions 25 to 111 are cleaved as a propeptide — activation peptide; it reads GKDDQDKQVY…VFPSKNLNLQ (87 aa). The Inhibitor I9 domain maps to 33–110; the sequence is VYIVYMGALP…SVFPSKNLNL (78 aa). The Peptidase S8 domain occupies 115–589; the sequence is SWNFMGLKEG…AGHVDPIAAI (475 aa). D143 serves as the catalytic Charge relay system. N-linked (GlcNAc...) asparagine glycosylation is present at N174. Catalysis depends on H204, which acts as the Charge relay system. N227 is a glycosylation site (N-linked (GlcNAc...) asparagine). In terms of domain architecture, PA spans 362-442; the sequence is KYPLVYGKSA…PVSVLSEDDY (81 aa). N-linked (GlcNAc...) asparagine glycosylation is present at N450. Catalysis depends on S527, which acts as the Charge relay system. N-linked (GlcNAc...) asparagine glycans are attached at residues N564, N598, N610, and N668.

Belongs to the peptidase S8 family. Post-translationally, the C-terminal propeptide is autocleaved.

The protein localises to the secreted. This Arabidopsis thaliana (Mouse-ear cress) protein is Subtilisin-like protease SBT4.6.